The chain runs to 33 residues: Protein YtiC (33 aa).

Residues 10–29 form a helical membrane-spanning segment; the sequence is FDMLSIYIIYKLIVSNNTWL.

The protein localises to the cell inner membrane. This is Protein YtiC from Escherichia coli (strain K12).